Here is a 341-residue protein sequence, read N- to C-terminus: NADH-ubiquinone oxidoreductase chain 2 (341 aa).

A run of 9 helical transmembrane segments spans residues 8–28, 61–81, 95–115, 145–165, 174–191, 195–215, 238–258, 272–292, and 321–341; these read IFLIMLIFGTLVTISSNSWLG, FLTQAFASSILLFAIIMLMFL, ILILSTLLLKSGAAPFHFWFP, FIYNFFMISIILSMLIGSLGG, LMAFSSINHLGWMLLAMM, MLWMTYFLMYSLLSFSIVLMF, LLIFLNLLSLGGLPPFLGFLP, LFILTISVCLTLITLYFYLRL, and LIFNFISIGGLVMISMIYIIM.

The protein belongs to the complex I subunit 2 family.

The protein localises to the mitochondrion inner membrane. The enzyme catalyses a ubiquinone + NADH + 5 H(+)(in) = a ubiquinol + NAD(+) + 4 H(+)(out). Functionally, core subunit of the mitochondrial membrane respiratory chain NADH dehydrogenase (Complex I) that is believed to belong to the minimal assembly required for catalysis. Complex I functions in the transfer of electrons from NADH to the respiratory chain. The immediate electron acceptor for the enzyme is believed to be ubiquinone. In Anopheles gambiae (African malaria mosquito), this protein is NADH-ubiquinone oxidoreductase chain 2 (mt:ND2).